A 198-amino-acid chain; its full sequence is Na(+)-translocating NADH-quinone reductase subunit E (198 aa).

Helical transmembrane passes span 11-31, 39-59, 77-97, 110-130, 140-160, and 176-196; these read SIFI…FLAV, FGLG…NNLV, FLNF…LEMI, GIFL…SFMV, IVYG…LAGI, and LGIT…FSGV.

This sequence belongs to the NqrDE/RnfAE family. Composed of six subunits; NqrA, NqrB, NqrC, NqrD, NqrE and NqrF.

It localises to the cell inner membrane. The catalysed reaction is a ubiquinone + n Na(+)(in) + NADH + H(+) = a ubiquinol + n Na(+)(out) + NAD(+). Functionally, NQR complex catalyzes the reduction of ubiquinone-1 to ubiquinol by two successive reactions, coupled with the transport of Na(+) ions from the cytoplasm to the periplasm. NqrA to NqrE are probably involved in the second step, the conversion of ubisemiquinone to ubiquinol. The chain is Na(+)-translocating NADH-quinone reductase subunit E from Photobacterium profundum (strain SS9).